The sequence spans 226 residues: Endonuclease V (226 aa).

Mg(2+) contacts are provided by Asp-43 and Asp-108.

This sequence belongs to the endonuclease V family. The cofactor is Mg(2+).

Its subcellular location is the cytoplasm. The enzyme catalyses Endonucleolytic cleavage at apurinic or apyrimidinic sites to products with a 5'-phosphate.. DNA repair enzyme involved in the repair of deaminated bases. Selectively cleaves double-stranded DNA at the second phosphodiester bond 3' to a deoxyinosine leaving behind the intact lesion on the nicked DNA. This is Endonuclease V from Thermosipho melanesiensis (strain DSM 12029 / CIP 104789 / BI429).